A 103-amino-acid chain; its full sequence is N(4)-acetylcytidine amidohydrolase (103 aa).

In terms of domain architecture, ASCH spans 6–92; that stretch reads TFFERFEQDI…VIQEIYPGLE (87 aa). Lys-20 serves as the catalytic Proton acceptor. The active-site Nucleophile is the Thr-23. Glu-73 (proton donor) is an active-site residue.

It belongs to the N(4)-acetylcytidine amidohydrolase family.

It carries out the reaction N(4)-acetylcytidine + H2O = cytidine + acetate + H(+). The enzyme catalyses N(4)-acetyl-2'-deoxycytidine + H2O = 2'-deoxycytidine + acetate + H(+). The catalysed reaction is N(4)-acetylcytosine + H2O = cytosine + acetate + H(+). Catalyzes the hydrolysis of N(4)-acetylcytidine (ac4C). This is N(4)-acetylcytidine amidohydrolase from Shewanella sp. (strain MR-4).